Consider the following 312-residue polypeptide: Mycothiol acetyltransferase (312 aa).

N-acetyltransferase domains lie at 8–136 (PIIR…LPMP) and 149–301 (LRLD…HQDH). Glu-38 serves as a coordination point for 1D-myo-inositol 2-(L-cysteinylamino)-2-deoxy-alpha-D-glucopyranoside. Residues 77–79 (LMV) and 85–90 (RQGIAT) each bind acetyl-CoA. Residues Glu-175, Lys-215, and Glu-226 each contribute to the 1D-myo-inositol 2-(L-cysteinylamino)-2-deoxy-alpha-D-glucopyranoside site. Residues 230 to 232 (LGV) and 237 to 243 (EGKGVGR) contribute to the acetyl-CoA site. Tyr-264 provides a ligand contact to 1D-myo-inositol 2-(L-cysteinylamino)-2-deoxy-alpha-D-glucopyranoside. 269-274 (NERVVH) is an acetyl-CoA binding site. The segment at 292–312 (PAKPARHQDHGRQSSPQERDA) is disordered. Positions 297 to 312 (RHQDHGRQSSPQERDA) are enriched in basic and acidic residues.

The protein belongs to the acetyltransferase family. MshD subfamily. As to quaternary structure, monomer.

It carries out the reaction 1D-myo-inositol 2-(L-cysteinylamino)-2-deoxy-alpha-D-glucopyranoside + acetyl-CoA = mycothiol + CoA + H(+). Catalyzes the transfer of acetyl from acetyl-CoA to desacetylmycothiol (Cys-GlcN-Ins) to form mycothiol. The chain is Mycothiol acetyltransferase from Propionibacterium freudenreichii subsp. shermanii (strain ATCC 9614 / DSM 4902 / CIP 103027 / NCIMB 8099 / CIRM-BIA1).